The following is a 438-amino-acid chain: GTPase Der (438 aa).

2 consecutive EngA-type G domains span residues 4 to 168 (PVVA…DDNS) and 177 to 352 (TKVC…NNYS). GTP contacts are provided by residues 10-17 (GRANVGKS), 57-61 (DTGGL), 120-123 (NKID), 183-190 (GKPNVGKS), 230-234 (DTAGL), and 295-298 (NKWD). Positions 353-437 (MRISTGVLND…PLQFEFKTRG (85 aa)) constitute a KH-like domain.

This sequence belongs to the TRAFAC class TrmE-Era-EngA-EngB-Septin-like GTPase superfamily. EngA (Der) GTPase family. Associates with the 50S ribosomal subunit.

In terms of biological role, GTPase that plays an essential role in the late steps of ribosome biogenesis. This Finegoldia magna (strain ATCC 29328 / DSM 20472 / WAL 2508) (Peptostreptococcus magnus) protein is GTPase Der.